Reading from the N-terminus, the 274-residue chain is MAAAGSATRRVGFVGAGRMAGAIAQGLIRAGKVEAQRIVASAPTDRNLCHFQALGCQTTHSNQEVLQSCLLVIFATKPHILPAVVAEVAPVVTAEHILVSVAAGVSLSTLEELLPPNTRVLRVLPNLPCVVQEGAIVMARGRHVGSSETKLLQHLLEACGRCEEVPEAYVDIHTGLSGSGVAFVCAFSEALAEGAIKMGMPSSLAHRIAAQTLLGTAKMLLHEGQHPAQLRSDVCTPGGTTIYGLHALEQGGLRAATMSAVEAATCRARELSRK.

The residue at position 2 (A2) is an N-acetylalanine.

The protein belongs to the pyrroline-5-carboxylate reductase family. Homodecamer; composed of 5 homodimers.

The protein localises to the cytoplasm. The enzyme catalyses L-proline + NADP(+) = (S)-1-pyrroline-5-carboxylate + NADPH + 2 H(+). It carries out the reaction L-proline + NAD(+) = (S)-1-pyrroline-5-carboxylate + NADH + 2 H(+). The protein operates within amino-acid biosynthesis; L-proline biosynthesis; L-proline from L-glutamate 5-semialdehyde: step 1/1. Functionally, oxidoreductase that catalyzes the last step in proline biosynthesis, which corresponds to the reduction of pyrroline-5-carboxylate (P5C) to L-proline using NAD(P)H. Proline is synthesized from either glutamate or ornithine; both are converted to P5C, and then to proline via pyrroline-5-carboxylate reductases (PYCRs). PYCR3 is exclusively linked to the biosynthesis of proline from ornithine. In Macaca fascicularis (Crab-eating macaque), this protein is Pyrroline-5-carboxylate reductase 3.